The primary structure comprises 576 residues: Acetylcholine receptor subunit alpha-like 2 (576 aa).

An N-terminal signal peptide occupies residues 1 to 21 (MAPGCCTTRPRPIALLAHIWR). Residues 22–261 (HCKPLCLLLV…FFNITLRRKT (240 aa)) lie on the Extracellular side of the membrane. N-linked (GlcNAc...) asparagine glycosylation occurs at Asn-65. 2 disulfide bridges follow: Cys-169/Cys-183 and Cys-243/Cys-244. N-linked (GlcNAc...) asparagine glycosylation occurs at Asn-254. 3 helical membrane-spanning segments follow: residues 262–285 (LFYT…VFYL), 293–311 (IALC…LLIS), and 327–346 (YLLF…IIIL). Over 347–526 (NIHYRKPSTH…WGFVAMVMDR (180 aa)) the chain is Cytoplasmic. Residues 527–545 (LFLWLFMIASLVGTFVILG) traverse the membrane as a helical segment. Asn-570 carries an N-linked (GlcNAc...) asparagine glycan.

The protein belongs to the ligand-gated ion channel (TC 1.A.9) family. Acetylcholine receptor (TC 1.A.9.1) subfamily. As to expression, CNS in embryos.

Its subcellular location is the postsynaptic cell membrane. It localises to the cell membrane. Its function is as follows. After binding acetylcholine, the AChR responds by an extensive change in conformation that affects all subunits and leads to opening of an ion-conducting channel across the plasma membrane. This chain is Acetylcholine receptor subunit alpha-like 2 (nAChRalpha2), found in Drosophila melanogaster (Fruit fly).